Reading from the N-terminus, the 861-residue chain is Leucine--tRNA ligase (861 aa).

The 'HIGH' region signature appears at 43–53 (PYPSGKLHMGH). A 'KMSKS' region motif is present at residues 588–592 (KMSKS). An ATP-binding site is contributed by Lys591.

This sequence belongs to the class-I aminoacyl-tRNA synthetase family.

It localises to the cytoplasm. It catalyses the reaction tRNA(Leu) + L-leucine + ATP = L-leucyl-tRNA(Leu) + AMP + diphosphate. This is Leucine--tRNA ligase from Symbiobacterium thermophilum (strain DSM 24528 / JCM 14929 / IAM 14863 / T).